The primary structure comprises 343 residues: Thromboxane A2 receptor (343 aa).

Topologically, residues 1–29 (MWPNGSSLGPCFRPTNITLEERRLIASPW) are extracellular. 2 N-linked (GlcNAc...) asparagine glycosylation sites follow: asparagine 4 and asparagine 16. A helical transmembrane segment spans residues 30–52 (FAASFCVVGLASNLLALSVLAGA). Residues 53–66 (RQGGSHTRSSFLTF) lie on the Cytoplasmic side of the membrane. A helical transmembrane segment spans residues 67–87 (LCGLVLTDFLGLLVTGTIVVS). Topologically, residues 88–106 (QHAALFEWHAVDPGCRLCR) are extracellular. A disulfide bridge connects residues cysteine 105 and cysteine 183. A helical transmembrane segment spans residues 107–128 (FMGVVMIFFGLSPLLLGAAMAS). Residues 129 to 149 (ERYLGITRPFSRPAVASQRRA) are Cytoplasmic-facing. The helical transmembrane segment at 150–172 (WATVGLVWAAALALGLLPLLGVG) threads the bilayer. The Extracellular segment spans residues 173 to 193 (RYTVQYPGSWCFLTLGAESGD). The helical transmembrane segment at 194 to 219 (VAFGLLFSMLGGLSVGLSFLLNTVSV) threads the bilayer. The Cytoplasmic segment spans residues 220–246 (ATLCHVYHGQEAAQQRPRDSEVEMMAQ). Residues 247–270 (LLGIMVVASVCWLPLLVFIAQTVL) traverse the membrane as a helical segment. The Extracellular portion of the chain corresponds to 271 to 289 (RNPPAMSPAGQLSRTTEKE). The helical transmembrane segment at 290 to 311 (LLIYLRVATWNQILDPWVYILF) threads the bilayer. At 312-343 (RRAVLRRLQPRLSTRPRSLSLQPQLTQRSGLQ) the chain is on the cytoplasmic side. Phosphoserine is present on residues serine 329 and serine 331.

It belongs to the G-protein coupled receptor 1 family. As to quaternary structure, interacts with RPGRIP1L. Interacts with PSMA3. Interacts with RACK1; the interaction regulates TBXA2R cell surface expression.

Its subcellular location is the cell membrane. In terms of biological role, receptor for thromboxane A2 (TXA2), a potent stimulator of platelet aggregation. The activity of this receptor is mediated by a G-protein that activates a phosphatidylinositol-calcium second messenger system. In the kidney, the binding of TXA2 to glomerular TP receptors causes intense vasoconstriction. Activates phospholipase C. Its function is as follows. Activates adenylyl cyclase. Inhibits adenylyl cyclase. This is Thromboxane A2 receptor (TBXA2R) from Homo sapiens (Human).